We begin with the raw amino-acid sequence, 246 residues long: Eukaryotic translation initiation factor 6 (246 aa).

Belongs to the eIF-6 family. As to quaternary structure, monomer. Associates with the 60S ribosomal subunit.

The protein resides in the cytoplasm. It localises to the nucleus. The protein localises to the nucleolus. Binds to the 60S ribosomal subunit and prevents its association with the 40S ribosomal subunit to form the 80S initiation complex in the cytoplasm. May also be involved in ribosome biogenesis. Involved in miRNA-mediated gene silencing. The sequence is that of Eukaryotic translation initiation factor 6 from Caenorhabditis elegans.